We begin with the raw amino-acid sequence, 1754 residues long: Intraflagellar transport protein 172 homolog (1754 aa).

WD repeat units follow at residues 14-53, 64-103, 110-149, 151-190, 194-232, 283-322, and 519-557; these read EQIQ…RDKF, KNSY…NDKK, PQAS…QSLY, GDSI…EPLG, QHPV…RTFD, ACLY…TVWQ, and TLLS…EHVT. TPR repeat units follow at residues 623–656, 690–723, 748–781, 807–840, 852–885, 1041–1074, 1140–1166, 1167–1199, 1211–1250, 1282–1315, and 1698–1733; these read KAMW…SKAY, GSDL…DEAV, SEQQ…ARAA, SELY…ARAL, TALE…QKAL, RGKL…EDGY, DEVH…FLKA, NKPR…AVGE, TSNY…AEEH, SRSY…NAED, and FPVR…SPGS.

Belongs to the IFT172 family.

The protein resides in the cell projection. Its subcellular location is the cilium. Its function is as follows. Required for the maintenance and formation of cilia. The polypeptide is Intraflagellar transport protein 172 homolog (Drosophila melanogaster (Fruit fly)).